We begin with the raw amino-acid sequence, 36 residues long: DNA binding protein ORF8 (36 aa).

It belongs to the microviridae J protein family.

Its subcellular location is the virion. It localises to the host cytoplasm. In terms of biological role, mediates ssDNA packaging into virion, it locates to the internal surface of the capsid. Additionally, plays a role in viral attachment to the host cell. The polypeptide is DNA binding protein ORF8 (Chlamydia phage 1 (Bacteriophage Chp1)).